Here is a 285-residue protein sequence, read N- to C-terminus: Trypsin Tyr p 3.0101 (285 aa).

Residues 1 to 16 (MKILLFLCFLVSVAFA) form the signal peptide. The propeptide occupies 17–33 (KPPTIQLKSNTKSQNGF). The region spanning 34-262 (IVGGTEAVDG…YLDWIELSAK (229 aa)) is the Peptidase S1 domain. A disulfide bridge links C58 with C74. Active-site charge relay system residues include H73 and D120. Disulfide bonds link C186–C202 and C214–C238. S218 (charge relay system) is an active-site residue.

Belongs to the peptidase S1 family.

The protein localises to the secreted. It carries out the reaction Preferential cleavage: Arg-|-Xaa, Lys-|-Xaa.. Inhibited by the serine protease inhibitor phenylmethylsulfonyl, and trypsin inhibitors soybean trypsin inhibitor and tosyllysine chloromethyl ketone. Not inhibited by dithiothreitol, a cysteine protease inhibitor. In terms of biological role, digests TAMe (p-toluene arginine methyl ester), but not ethyl N-benzoyl-L-tyrosinate (BTEE). The protein is Trypsin Tyr p 3.0101 of Tyrophagus putrescentiae (Mold mite).